A 461-amino-acid chain; its full sequence is Probable lipid II flippase MurJ (461 aa).

Transmembrane regions (helical) follow at residues 5 to 25 (ILGAGVYSDIFFVAFKLPNLF), 51 to 71 (FASLVGLIFCIVLFMWCLLVA), 96 to 116 (IVAINFWYLLLVFITTFLGAL), 123 to 143 (FFASAYSASLLNVCMILALLI), 156 to 176 (LSYGVLLGGVAQILLHFYPLV), 229 to 249 (IASFLDTTIASFLASGSVSYL), 258 to 278 (LPLALFAIAISTALFPSIAIA), 293 to 313 (KAWFFLVGVLLLCSIGGIMLS), 337 to 357 (VFSLYLLGLLPFGLTKLFSLW), 372 to 392 (LISLFLGLAASLSLMPLLGVL), 402 to 422 (GLFLFVLTIKAFGFQLFLGII), and 429 to 449 (LVILFLACVEILLLLAFKSWV).

This sequence belongs to the MurJ/MviN family.

It localises to the cell inner membrane. It participates in cell wall biogenesis; peptidoglycan biosynthesis. Its function is as follows. Involved in peptidoglycan biosynthesis. Transports lipid-linked peptidoglycan precursors from the inner to the outer leaflet of the cytoplasmic membrane. The protein is Probable lipid II flippase MurJ of Helicobacter pylori (strain ATCC 700392 / 26695) (Campylobacter pylori).